The chain runs to 92 residues: Small ribosomal subunit protein uS19c (92 aa).

It belongs to the universal ribosomal protein uS19 family.

Its subcellular location is the plastid. The protein localises to the chloroplast. Protein S19 forms a complex with S13 that binds strongly to the 16S ribosomal RNA. This chain is Small ribosomal subunit protein uS19c, found in Tupiella akineta (Green alga).